The sequence spans 545 residues: MHQVGSTNMMKIQSIAQLSITMDAGTKILVVGDVRGRFKQLFQRVEQVNKKAGPFEILCCVGDFFGEDKQNEELIAYKNGFKHITVPTYILGPNQREHEKYFENLTDGEICTNLTYLGRRGVYTLSSGVKIAYLSGLEAQGTADSAGSEHEFTKADVIAVRNSCLVSKNCSTEYRGVDVLLTSQWPFGMQEKENATASKLVSFLCREIKPRYHFCAINGTHYESAPFRMPKDETTQFELCTRFISLAEVGNAEKAKYIYALSLKPVDKSRLLDLAQKTTNEIPCPFIGLDLGGAIGKNDSSENRQYFYDMDGGRRKRQGGDNNKRDKRPRIPQIEQDKCWFCLSSPDVEKHLIITVGEHFYLALAKGPINKHHVMILSTKHVPCAAQLSPDDWKELNKFKAALRKFFKTLGQVVCFTERHYKSVHLQINALAFEEGYAWKIKHSFEDKAEEFNLEFETLPALDSEKMLPEMGPYFLAELPDDSTLITRQMKHFPIHFARDVFCSENLLNCDEKVNWKDCLLDKDEEVAYVEDFRKAFAPFDFTDD.

Residues 306–329 (YFYDMDGGRRKRQGGDNNKRDKRP) form a disordered region.

The protein belongs to the CWF19 family.

The protein is CWF19-like protein 1 homolog of Drosophila melanogaster (Fruit fly).